A 275-amino-acid polypeptide reads, in one-letter code: Large ribosomal subunit protein uL2c (275 aa).

A disordered region spans residues 222-258 (GSAMNPVDHPHGGGEGRAPIGRARPVSPWGRPALGAK).

This sequence belongs to the universal ribosomal protein uL2 family. As to quaternary structure, part of the 50S ribosomal subunit.

The protein resides in the plastid. It is found in the chloroplast. The chain is Large ribosomal subunit protein uL2c (rpl2) from Chlorella vulgaris (Green alga).